The sequence spans 446 residues: Glutamine synthetase (446 aa).

The region spanning 18-103 (ENVRYLRLQF…LICDVYKTDG (86 aa)) is the GS beta-grasp domain. The region spanning 110-446 (PRANLKRVLK…WERDQYMKQY (337 aa)) is the GS catalytic domain. The Mg(2+) site is built by glutamate 134 and glutamate 136. Glutamate 186 is a binding site for ATP. Residues glutamate 191 and glutamate 198 each coordinate Mg(2+). Residues 242–243 (NG) and glycine 243 contribute to the L-glutamate site. Position 247 (histidine 247) interacts with Mg(2+). Serine 251 serves as a coordination point for ATP. The L-glutamate site is built by arginine 300, glutamate 306, and arginine 318. Arginine 318 and arginine 323 together coordinate ATP. Residue glutamate 335 coordinates Mg(2+). L-glutamate is bound at residue arginine 337.

It belongs to the glutamine synthetase family. In terms of assembly, oligomer of 12 subunits arranged in the form of two hexagons. In its feedback-inhibited form, interacts with TnrA in order to block its DNA-binding activity. The cofactor is Mg(2+).

The protein localises to the cytoplasm. The enzyme catalyses L-glutamate + NH4(+) + ATP = L-glutamine + ADP + phosphate + H(+). Inhibited by glutamine. In terms of biological role, glutamine synthetase (GS) is an unusual multitasking protein that functions as an enzyme, a transcription coregulator, and a chaperone in ammonium assimilation and in the regulation of genes involved in nitrogen metabolism. It catalyzes the ATP-dependent biosynthesis of glutamine from glutamate and ammonia. Feedback-inhibited GlnA also interacts with and regulates the activity of the transcriptional regulator TnrA. During nitrogen limitation, TnrA is in its DNA-binding active state and turns on the transcription of genes required for nitrogen assimilation. Under conditions of nitrogen excess, feedback-inhibited GlnA forms a stable complex with TnrA, which inhibits its DNA-binding activity. In contrast, feedback-inhibited GlnA acts as a chaperone to stabilize the DNA-binding activity of GlnR, which represses the transcription of nitrogen assimilation genes. This Staphylococcus aureus (strain MRSA252) protein is Glutamine synthetase.